Consider the following 339-residue polypeptide: Small ribosomal subunit biogenesis GTPase RsgA (339 aa).

The 161-residue stretch at 111–271 (MRGLLKPVAA…LIDSPGIREF (161 aa)) folds into the CP-type G domain. GTP is bound by residues 159–162 (NKAD) and 213–221 (GQSGVGKSS). Zn(2+) contacts are provided by Cys295, Cys300, His302, and Cys308.

It belongs to the TRAFAC class YlqF/YawG GTPase family. RsgA subfamily. Monomer. Associates with 30S ribosomal subunit, binds 16S rRNA. Zn(2+) serves as cofactor.

It is found in the cytoplasm. Its function is as follows. One of several proteins that assist in the late maturation steps of the functional core of the 30S ribosomal subunit. Helps release RbfA from mature subunits. May play a role in the assembly of ribosomal proteins into the subunit. Circularly permuted GTPase that catalyzes slow GTP hydrolysis, GTPase activity is stimulated by the 30S ribosomal subunit. This is Small ribosomal subunit biogenesis GTPase RsgA from Pseudomonas aeruginosa (strain UCBPP-PA14).